The primary structure comprises 326 residues: MSLFDWFANREKAEPPVLQPQSPQEREVADGLWTKCPACGVLTYTKDLQGNWMVCVECGHHLRVDSDERIRQLIDAKTWQPINEHLRPTDPLKFKDRKSYKDRIRDTQKATDLTDAVQTGHGRLDGLPIALGVMDFRFMGGSMGSVVGEKLCRLIEYATLERLPVVIICASGGARMQEGMLSLMQMAKISGALQNHREQKLLYIPVLTHPTTGGVTASFAMLGDLILAEPKATIGFAGRRVIEQTLREKLPDDFQTSEYLLHHGFVDAIVPRPQLKRTLAQLISLHQPFYPILPPLNADSNQVNPELVLSHTALAVDNQISVNQDG.

The CoA carboxyltransferase N-terminal domain occupies 32 to 301 (LWTKCPACGV…ILPPLNADSN (270 aa)). Zn(2+) is bound by residues C36, C39, C55, and C58. The C4-type zinc-finger motif lies at 36–58 (CPACGVLTYTKDLQGNWMVCVEC).

This sequence belongs to the AccD/PCCB family. In terms of assembly, acetyl-CoA carboxylase is a heterohexamer composed of biotin carboxyl carrier protein (AccB), biotin carboxylase (AccC) and two subunits each of ACCase subunit alpha (AccA) and ACCase subunit beta (AccD). It depends on Zn(2+) as a cofactor.

It localises to the cytoplasm. It catalyses the reaction N(6)-carboxybiotinyl-L-lysyl-[protein] + acetyl-CoA = N(6)-biotinyl-L-lysyl-[protein] + malonyl-CoA. It functions in the pathway lipid metabolism; malonyl-CoA biosynthesis; malonyl-CoA from acetyl-CoA: step 1/1. Its function is as follows. Component of the acetyl coenzyme A carboxylase (ACC) complex. Biotin carboxylase (BC) catalyzes the carboxylation of biotin on its carrier protein (BCCP) and then the CO(2) group is transferred by the transcarboxylase to acetyl-CoA to form malonyl-CoA. The sequence is that of Acetyl-coenzyme A carboxylase carboxyl transferase subunit beta from Synechocystis sp. (strain ATCC 27184 / PCC 6803 / Kazusa).